Consider the following 117-residue polypeptide: MPSPGTVCSLLLLGMLWLDLAMAGSSFLSPEHQRVQQRKESKKPPAKLQPRALAGWLRPEDGGQAEGAEDELEVRFNAPFDVGIKLSGVQYQQHSQALGKFLQDILWEEAKEAPADK.

An N-terminal signal peptide occupies residues 1–23; it reads MPSPGTVCSLLLLGMLWLDLAMA. Ser-26 is lipidated: O-decanoyl serine; alternate. A lipid anchor (O-hexanoyl serine; alternate) is attached at Ser-26. A lipid anchor (O-octanoyl serine; alternate) is attached at Ser-26. The disordered stretch occupies residues 29–50; the sequence is SPEHQRVQQRKESKKPPAKLQP. Residues 31 to 43 are compositionally biased toward basic and acidic residues; the sequence is EHQRVQQRKESKK. Residues 52–75 constitute a propeptide, removed in mature form; it reads ALAGWLRPEDGGQAEGAEDELEVR. Residue Leu-98 is modified to Leucine amide. Residues 99–117 constitute a propeptide, removed in mature form; the sequence is GKFLQDILWEEAKEAPADK.

This sequence belongs to the motilin family. O-octanoylated by GOAT/MBOAT4. O-octanoylation or O-decanoylation is essential for ghrelin activity. The O-decanoylated forms Ghrelin-27-C10 and Ghrelin-28-C10 differ in the length of the carbon backbone of the carboxylic acid bound to Ser-26. A small fraction of ghrelin, ghrelin-28-C10:1, may be modified with a singly unsaturated carboxylic acid. Also O-acetylated and O-butyrylated on Ser-26 to minor levels. In terms of processing, amidation of Leu-98 is essential for obestatin activity. Highest level in stomach. All forms are found in serum as well. Other tissues compensate for the loss of ghrelin synthesis in the stomach following gastrectomy.

It is found in the secreted. Functionally, ghrelin is the ligand for growth hormone secretagogue receptor type 1 (GHSR). Induces the release of growth hormone from the pituitary. Has an appetite-stimulating effect, induces adiposity and stimulates gastric acid secretion. Involved in growth regulation. In terms of biological role, may be the ligand for GPR39. May have an appetite-reducing effect resulting in decreased food intake. May reduce gastric emptying activity and jejunal motility. The sequence is that of Appetite-regulating hormone (GHRL) from Homo sapiens (Human).